Reading from the N-terminus, the 240-residue chain is Lactate utilization protein C (240 aa).

It belongs to the LutC/YkgG family.

Is involved in L-lactate degradation and allows cells to grow with lactate as the sole carbon source. The polypeptide is Lactate utilization protein C (Bacillus pumilus (strain SAFR-032)).